The primary structure comprises 658 residues: Probable CoA ligase CCL6 (658 aa).

Residues 226-234 (TSGATGEPK), 411-416 (QGYGLT), D497, 509-512 (IIDR), and K632 each bind ATP. Positions 298-411 (DIRFLMDDLQ…RVTSCAALSQ (114 aa)) are SBD1. An SBD2 region spans residues 412–477 (GYGLTESCGG…LRGTTLFSGY (66 aa)).

The protein belongs to the ATP-dependent AMP-binding enzyme family. As to expression, mostly expressed in glandular trichomes (lupulin glands) after flowering, and, to a lower extent, in stems, leaves, cones and flowers.

It localises to the cytoplasm. It is found in the cytosol. This Humulus lupulus (European hop) protein is Probable CoA ligase CCL6.